A 165-amino-acid chain; its full sequence is MTTRKDSELEGVTLLGNQGTNYLFDYSPEVLESFPNKHENRDYFVKFNCPEFTSLCPKTGQPDFATIYISYIPDKKMVESKSLKLYLFSFRNHGDFHEDCMNIIMNDLIELMDPRYIEVWGKFTPRGGISIDPYTNYGKPGTKYEKMAEYRMMNHDLYPETIDNR.

The active-site Thioimide intermediate is C56. The Proton donor role is filled by D63. Substrate contacts are provided by residues 78-80 (VES) and 97-98 (HE).

The protein belongs to the GTP cyclohydrolase I family. QueF type 1 subfamily.

The protein localises to the cytoplasm. The enzyme catalyses 7-aminomethyl-7-carbaguanine + 2 NADP(+) = 7-cyano-7-deazaguanine + 2 NADPH + 3 H(+). It functions in the pathway tRNA modification; tRNA-queuosine biosynthesis. Functionally, catalyzes the NADPH-dependent reduction of 7-cyano-7-deazaguanine (preQ0) to 7-aminomethyl-7-deazaguanine (preQ1). The chain is NADPH-dependent 7-cyano-7-deazaguanine reductase from Bacillus licheniformis (strain ATCC 14580 / DSM 13 / JCM 2505 / CCUG 7422 / NBRC 12200 / NCIMB 9375 / NCTC 10341 / NRRL NRS-1264 / Gibson 46).